A 204-amino-acid chain; its full sequence is Cobalt-containing nitrile hydratase subunit alpha (204 aa).

Co(2+) is bound by residues Cys-108, Cys-111, Ser-112, and Cys-113. Position 111 is a cysteine sulfinic acid (-SO2H) (Cys-111). Cys-113 is modified (cysteine sulfenic acid (-SOH)).

This sequence belongs to the nitrile hydratase subunit alpha family. In terms of assembly, heterotetramer of two alpha and two beta chains. Co(2+) is required as a cofactor.

The enzyme catalyses an aliphatic primary amide = an aliphatic nitrile + H2O. NHase catalyzes the hydration of various nitrile compounds to the corresponding amides. The chain is Cobalt-containing nitrile hydratase subunit alpha from Pseudonocardia thermophila.